The sequence spans 660 residues: E3 ubiquitin-protein ligase ORTHRUS 3 (660 aa).

A PHD-type zinc finger spans residues Glu12–Glu63. Residues Gln107–Gly129 are disordered. Residues Cys141 to Arg197 form an RING-type 1 zinc finger. The YDG domain occupies Val285–Asn434. The RING-type 2 zinc-finger motif lies at Cys528–Pro585. Residues Gln593–Glu622 are a coiled coil. Basic and acidic residues-rich tracts occupy residues Lys610 to Asp621 and Gln637 to Thr646. Residues Lys610 to Lys660 form a disordered region.

It localises to the nucleus. The catalysed reaction is S-ubiquitinyl-[E2 ubiquitin-conjugating enzyme]-L-cysteine + [acceptor protein]-L-lysine = [E2 ubiquitin-conjugating enzyme]-L-cysteine + N(6)-ubiquitinyl-[acceptor protein]-L-lysine.. Its pathway is protein modification; protein ubiquitination. In terms of biological role, E3 ubiquitin-protein ligase. May participate in CpG methylation-dependent transcriptional regulation. This chain is E3 ubiquitin-protein ligase ORTHRUS 3 (ORTH3), found in Arabidopsis thaliana (Mouse-ear cress).